We begin with the raw amino-acid sequence, 329 residues long: Ribosomal RNA small subunit methyltransferase H (329 aa).

S-adenosyl-L-methionine contacts are provided by residues 44–46 (GGY), Asp-62, Asp-110, and Gln-117. Residues 297 to 329 (APAELAANPRARSARLRSAERTSAPARRLGDAA) form a disordered region.

The protein belongs to the methyltransferase superfamily. RsmH family.

It is found in the cytoplasm. The enzyme catalyses cytidine(1402) in 16S rRNA + S-adenosyl-L-methionine = N(4)-methylcytidine(1402) in 16S rRNA + S-adenosyl-L-homocysteine + H(+). In terms of biological role, specifically methylates the N4 position of cytidine in position 1402 (C1402) of 16S rRNA. The polypeptide is Ribosomal RNA small subunit methyltransferase H (Rhodospirillum centenum (strain ATCC 51521 / SW)).